Reading from the N-terminus, the 92-residue chain is Small ribosomal subunit protein uS19c (92 aa).

Belongs to the universal ribosomal protein uS19 family.

It localises to the plastid. Its subcellular location is the chloroplast. Functionally, protein S19 forms a complex with S13 that binds strongly to the 16S ribosomal RNA. The chain is Small ribosomal subunit protein uS19c (rps19) from Porphyra purpurea (Red seaweed).